Here is a 475-residue protein sequence, read N- to C-terminus: Ribulose bisphosphate carboxylase large chain (475 aa).

A propeptide spanning residues 1–2 is cleaved from the precursor; that stretch reads MS. At Pro-3 the chain carries N-acetylproline. N6,N6,N6-trimethyllysine is present on Lys-14. Substrate-binding residues include Asn-123 and Thr-173. The active-site Proton acceptor is the Lys-175. Lys-177 lines the substrate pocket. 3 residues coordinate Mg(2+): Lys-201, Asp-203, and Glu-204. At Lys-201 the chain carries N6-carboxylysine. The active-site Proton acceptor is the His-294. The substrate site is built by Arg-295, His-327, and Ser-379.

This sequence belongs to the RuBisCO large chain family. Type I subfamily. As to quaternary structure, heterohexadecamer of 8 large chains and 8 small chains; disulfide-linked. The disulfide link is formed within the large subunit homodimers. Requires Mg(2+) as cofactor. In terms of processing, the disulfide bond which can form in the large chain dimeric partners within the hexadecamer appears to be associated with oxidative stress and protein turnover.

It localises to the plastid. The protein resides in the chloroplast. It catalyses the reaction 2 (2R)-3-phosphoglycerate + 2 H(+) = D-ribulose 1,5-bisphosphate + CO2 + H2O. The catalysed reaction is D-ribulose 1,5-bisphosphate + O2 = 2-phosphoglycolate + (2R)-3-phosphoglycerate + 2 H(+). RuBisCO catalyzes two reactions: the carboxylation of D-ribulose 1,5-bisphosphate, the primary event in carbon dioxide fixation, as well as the oxidative fragmentation of the pentose substrate in the photorespiration process. Both reactions occur simultaneously and in competition at the same active site. The sequence is that of Ribulose bisphosphate carboxylase large chain from Chara vulgaris (Common stonewort).